The chain runs to 196 residues: MAHGPNYRVKYRRRREGKTNYYKRYTYVINNTTRLVVRLTNKYIIAQIAKFNPKGDVIVVAAHSMELAKKFGWKGDLNNTPAAYLTGYLLGVRALKAGIKEAVADIGLFVPVKGSRIFTAIKGAIDAGLSIPVGDLGIKEDRIKGVHIASYAQKLEAENPELFKRLFSKYLERGLHPKDLPSHFEEILNKIKSGGA.

The protein belongs to the universal ribosomal protein uL18 family. As to quaternary structure, part of the 50S ribosomal subunit. Contacts the 5S and 23S rRNAs.

Functionally, this is one of the proteins that bind and probably mediate the attachment of the 5S RNA into the large ribosomal subunit, where it forms part of the central protuberance. This is Large ribosomal subunit protein uL18 from Sulfurisphaera tokodaii (strain DSM 16993 / JCM 10545 / NBRC 100140 / 7) (Sulfolobus tokodaii).